Reading from the N-terminus, the 331-residue chain is Phosphoenolpyruvate transferase (331 aa).

Asp63 lines the 7,8-didemethyl-8-hydroxy-5-deazariboflavin pocket.

Belongs to the CofD family. In terms of assembly, homodimer. Mg(2+) is required as a cofactor.

The enzyme catalyses enolpyruvoyl-2-diphospho-5'-guanosine + 7,8-didemethyl-8-hydroxy-5-deazariboflavin = dehydro coenzyme F420-0 + GMP + H(+). Its pathway is cofactor biosynthesis; coenzyme F420 biosynthesis. Its function is as follows. Catalyzes the transfer of the phosphoenolpyruvate moiety from enoylpyruvoyl-2-diphospho-5'-guanosine (EPPG) to 7,8-didemethyl-8-hydroxy-5-deazariboflavin (FO) with the formation of dehydro coenzyme F420-0 and GMP. This chain is Phosphoenolpyruvate transferase, found in Mycobacterium sp. (strain KMS).